A 677-amino-acid polypeptide reads, in one-letter code: Secretogranin-1 (677 aa).

Residues 1–20 form the signal peptide; it reads MQPAMLLGLLGAAALAAVSS. Residues Cys36 and Cys57 are joined by a disulfide bond. Disordered stretches follow at residues 63-505 and 531-558; these read KSGK…RQYE and NSDFEKRGNPDDSFLEDEGEDRNGVTLT. The span at 64-90 shows a compositional bias: basic and acidic residues; that stretch reads SGKEVKGEEKGENQNSKFEVRLLRDPA. Phosphoserine is present on residues Ser93, Ser99, and Ser100. O-linked (Xyl...) (chondroitin sulfate) serine glycosylation occurs at Ser93. O-linked (GalNAc...) threonine glycosylation is present at Thr115. Over residues 118 to 133 the composition is skewed to basic and acidic residues; sequence GNEKWTEGGGHSREGV. Residues Ser129, Ser147, Ser190, and Ser220 each carry the phosphoserine modification. 2 stretches are compositionally biased toward basic and acidic residues: residues 148–192 and 200–249; these read KEAK…DSGE and KRSE…KPQE. An O-linked (Xyl...) (chondroitin sulfate) serine glycan is attached at Ser237. The span at 251–280 shows a compositional bias: acidic residues; sequence TDQDQSQEESQEGEEGEEGEEGEEGEEDSA. Residues Ser256, Ser260, Ser300, Ser301, Ser318, and Ser342 each carry the phosphoserine modification. Positions 306-322 are enriched in basic and acidic residues; it reads PLSEERRPSPKESKEAD. Tyr348 is modified (sulfotyrosine). Composition is skewed to basic and acidic residues over residues 363–409 and 421–455; these read RGSE…ERSY and GREPGAHSALDTREEKRLLDEGHYPVRESPIDTAK. Ser365, Ser375, and Ser378 each carry phosphoserine. Tyr472 carries the post-translational modification Sulfotyrosine. Residues 491–504 are compositionally biased toward basic and acidic residues; that stretch reads EESREEVRFPDRQY. Residues Ser493, Ser532, and Ser543 each carry the phosphoserine modification. Tyr566 and Tyr624 each carry sulfotyrosine. The tract at residues 622-646 is disordered; sequence DFYDSEEQMGPHQEANDEKARADQR. At Ser626 the chain carries Phosphoserine. Residues 635–646 are compositionally biased toward basic and acidic residues; sequence EANDEKARADQR.

This sequence belongs to the chromogranin/secretogranin protein family. Interacts with ITPR1 in the secretory granules.

Its subcellular location is the secreted. Functionally, secretogranin-1 is a neuroendocrine secretory granule protein, which may be the precursor for other biologically active peptides. The sequence is that of Secretogranin-1 (Chgb) from Mus musculus (Mouse).